The primary structure comprises 799 residues: ATP synthase subunit alpha (799 aa).

An ATP synthase alpha chain region spans residues 1–549 (MTDNKNHSLI…EEVSLKPTTE (549 aa)). ATP is bound at residue 170–177 (GDRQTGKT). The segment at 550-799 (TSEAVQIEEK…KGPSGFTYLK (250 aa)) is unknown.

The protein belongs to the ATPase alpha/beta chains family. As to quaternary structure, F-type ATPases have 2 components, CF(1) - the catalytic core - and CF(0) - the membrane proton channel. CF(1) has five subunits: alpha(3), beta(3), gamma(1), delta(1), epsilon(1). CF(0) has three main subunits: a(1), b(2) and c(9-12). The alpha and beta chains form an alternating ring which encloses part of the gamma chain. CF(1) is attached to CF(0) by a central stalk formed by the gamma and epsilon chains, while a peripheral stalk is formed by the delta and b chains.

The protein localises to the cell membrane. The enzyme catalyses ATP + H2O + 4 H(+)(in) = ADP + phosphate + 5 H(+)(out). In terms of biological role, produces ATP from ADP in the presence of a proton gradient across the membrane. The alpha chain is a regulatory subunit. The protein is ATP synthase subunit alpha (atpA) of Ureaplasma parvum serovar 3 (strain ATCC 27815 / 27 / NCTC 11736).